The sequence spans 261 residues: Ribosome-inactivating protein PD-L1/PD-L2 (261 aa).

2 N-linked (GlcNAc...) asparagine; in PD-L1 and PD-L2 glycosylation sites follow: Asn10 and Asn43. Cystine bridges form between Cys34-Cys258 and Cys84-Cys105. Residue Tyr72 is part of the active site. Substrate is bound at residue Val73. Ser120 lines the substrate pocket. Catalysis depends on residues Tyr122, Glu175, and Arg178. Substrate is bound at residue Arg178. The N-linked (GlcNAc...) asparagine; in PD-L1 glycan is linked to Asn255.

This sequence belongs to the ribosome-inactivating protein family. Type 1 RIP subfamily. In terms of processing, N-glycosylated. Loss of glycosylation does not affect DNA-cleaving ability. Loss of glycosylation does not affect protein synthesis inhibition, but increases adenine polynucleotide glycosidase activity likely as a consequence of the increased accessibility of substrates to the active site pocket in the absence of glycosylation. In terms of tissue distribution, expressed in leaves (at protein level).

The enzyme catalyses Endohydrolysis of the N-glycosidic bond at one specific adenosine on the 28S rRNA.. Functionally, inhibits protein synthesis. Has adenine polynucleotide glycosidase activity on herring sperm (hs)DNA and poly(A) substrates. Cleaves supercoiled pBR322 dsDNA. The sequence is that of Ribosome-inactivating protein PD-L1/PD-L2 from Phytolacca dioica (Bella sombra tree).